Reading from the N-terminus, the 823-residue chain is Aminopeptidase O (823 aa).

His481 is a binding site for Zn(2+). Residue Glu482 is the Proton acceptor of the active site. Zn(2+)-binding residues include His485 and Glu504. The Nucleolar localization signal signature appears at 693–703 (RRPRKRKRGKR).

The protein belongs to the peptidase M1 family. It depends on Zn(2+) as a cofactor. As to expression, expressed in testis, heart, brain, lung, liver, skeletal muscle, kidney and ovary. Expressed in vascular tissues.

It localises to the nucleus. It is found in the nucleolus. The protein resides in the cytoplasm. Functionally, aminopeptidase which catalyzes the hydrolysis of amino acid residues from the N-terminus of peptide or protein substrates. The polypeptide is Aminopeptidase O (Aopep) (Mus musculus (Mouse)).